The sequence spans 296 residues: 4-hydroxy-tetrahydrodipicolinate synthase (296 aa).

Position 49 (Thr49) interacts with pyruvate. Residue Tyr137 is the Proton donor/acceptor of the active site. Residue Lys165 is the Schiff-base intermediate with substrate of the active site. Val207 serves as a coordination point for pyruvate.

This sequence belongs to the DapA family. Homotetramer; dimer of dimers.

Its subcellular location is the cytoplasm. The enzyme catalyses L-aspartate 4-semialdehyde + pyruvate = (2S,4S)-4-hydroxy-2,3,4,5-tetrahydrodipicolinate + H2O + H(+). The protein operates within amino-acid biosynthesis; L-lysine biosynthesis via DAP pathway; (S)-tetrahydrodipicolinate from L-aspartate: step 3/4. Functionally, catalyzes the condensation of (S)-aspartate-beta-semialdehyde [(S)-ASA] and pyruvate to 4-hydroxy-tetrahydrodipicolinate (HTPA). This is 4-hydroxy-tetrahydrodipicolinate synthase from Nitrobacter hamburgensis (strain DSM 10229 / NCIMB 13809 / X14).